Consider the following 431-residue polypeptide: Adenylosuccinate synthetase (431 aa).

GTP contacts are provided by residues 13-19 (GDEGKGK) and 41-43 (GHT). Asp-14 functions as the Proton acceptor in the catalytic mechanism. Asp-14 and Gly-41 together coordinate Mg(2+). Residues 14-17 (DEGK), 39-42 (NAGH), Thr-130, Arg-144, Gln-225, Thr-240, and Arg-304 each bind IMP. The active-site Proton donor is His-42. 300 to 306 (ATTGRKR) contacts substrate. GTP contacts are provided by residues Arg-306, 332–334 (KLD), and 415–417 (STG).

The protein belongs to the adenylosuccinate synthetase family. As to quaternary structure, homodimer. Requires Mg(2+) as cofactor.

It localises to the cytoplasm. It catalyses the reaction IMP + L-aspartate + GTP = N(6)-(1,2-dicarboxyethyl)-AMP + GDP + phosphate + 2 H(+). The protein operates within purine metabolism; AMP biosynthesis via de novo pathway; AMP from IMP: step 1/2. In terms of biological role, plays an important role in the de novo pathway of purine nucleotide biosynthesis. Catalyzes the first committed step in the biosynthesis of AMP from IMP. This Shewanella halifaxensis (strain HAW-EB4) protein is Adenylosuccinate synthetase.